A 227-amino-acid chain; its full sequence is 2,3-bisphosphoglycerate-dependent phosphoglycerate mutase (227 aa).

Substrate is bound by residues 7-14, 20-21, R59, 86-89, K97, 113-114, and 182-183; these read RHGLSEWN, TG, ERHY, RR, and GN. H8 acts as the Tele-phosphohistidine intermediate in catalysis. E86 acts as the Proton donor/acceptor in catalysis.

It belongs to the phosphoglycerate mutase family. BPG-dependent PGAM subfamily. In terms of assembly, homodimer.

It catalyses the reaction (2R)-2-phosphoglycerate = (2R)-3-phosphoglycerate. Its pathway is carbohydrate degradation; glycolysis; pyruvate from D-glyceraldehyde 3-phosphate: step 3/5. Its function is as follows. Catalyzes the interconversion of 2-phosphoglycerate and 3-phosphoglycerate. The polypeptide is 2,3-bisphosphoglycerate-dependent phosphoglycerate mutase (Actinobacillus succinogenes (strain ATCC 55618 / DSM 22257 / CCUG 43843 / 130Z)).